Consider the following 245-residue polypeptide: Triosephosphate isomerase (245 aa).

Residue 9–11 participates in substrate binding; sequence NWK. His92 acts as the Electrophile in catalysis. Catalysis depends on Glu164, which acts as the Proton acceptor. Substrate is bound by residues Gly170, Ser209, and 230 to 231; that span reads GG.

Belongs to the triosephosphate isomerase family. In terms of assembly, homodimer.

Its subcellular location is the cytoplasm. The catalysed reaction is D-glyceraldehyde 3-phosphate = dihydroxyacetone phosphate. Its pathway is carbohydrate biosynthesis; gluconeogenesis. It functions in the pathway carbohydrate degradation; glycolysis; D-glyceraldehyde 3-phosphate from glycerone phosphate: step 1/1. Involved in the gluconeogenesis. Catalyzes stereospecifically the conversion of dihydroxyacetone phosphate (DHAP) to D-glyceraldehyde-3-phosphate (G3P). The sequence is that of Triosephosphate isomerase from Cupriavidus necator (strain ATCC 17699 / DSM 428 / KCTC 22496 / NCIMB 10442 / H16 / Stanier 337) (Ralstonia eutropha).